The chain runs to 453 residues: Carbamoyl phosphate synthase arginine-specific small chain (453 aa).

The transit peptide at 1 to 28 directs the protein to the mitochondrion; the sequence is MFARVFKAMPARASALTSVNASIPARFM. The Glutamine amidotransferase type-1 domain occupies 219-406; it reads HVAVIDCGVK…IDSVKKYKAS (188 aa). The Nucleophile role is filled by Cys-295. Catalysis depends on residues His-379 and Glu-381.

The protein belongs to the CarA family. In terms of assembly, heterodimer composed of 2 chains; the small (or glutamine) chain promotes the hydrolysis of glutamine to ammonia, which is used by the large (or ammonia) chain to synthesize carbamoyl phosphate.

The protein resides in the mitochondrion matrix. It catalyses the reaction hydrogencarbonate + L-glutamine + 2 ATP + H2O = carbamoyl phosphate + L-glutamate + 2 ADP + phosphate + 2 H(+). The enzyme catalyses L-glutamine + H2O = L-glutamate + NH4(+). The protein operates within amino-acid biosynthesis; L-arginine biosynthesis; carbamoyl phosphate from bicarbonate: step 1/1. In terms of biological role, small subunit of the arginine-specific carbamoyl phosphate synthase (CPSase). CPSase catalyzes the formation of carbamoyl phosphate from the ammonia moiety of glutamine, carbonate, and phosphate donated by ATP, the first step of the arginine biosynthetic pathway. The small subunit (glutamine amidotransferase) binds and cleaves glutamine to supply the large subunit with the substrate ammonia. This chain is Carbamoyl phosphate synthase arginine-specific small chain (cpa1), found in Aspergillus fumigatus (strain ATCC MYA-4609 / CBS 101355 / FGSC A1100 / Af293) (Neosartorya fumigata).